Reading from the N-terminus, the 561-residue chain is Laccase-1 (561 aa).

The first 20 residues, 1–20 (MKNSFFSSLAKFASLSLAFA), serve as a signal peptide directing secretion. Plastocyanin-like domains are found at residues 68-185 (VVQN…GPAT) and 191-337 (DLGM…YTGS). Residues Asn-71, Asn-87, and Asn-114 are each glycosylated (N-linked (GlcNAc...) asparagine). Cu cation is bound by residues His-119, His-121, His-163, and His-165. An intrachain disulfide couples Cys-140 to Cys-542. Asn-226, Asn-284, Asn-327, Asn-391, and Asn-398 each carry an N-linked (GlcNAc...) asparagine glycan. The region spanning 396–525 (LLNWTDPTLL…ALQFVESESS (130 aa)) is the Plastocyanin-like 3 domain. Residues His-445, His-448, His-450, His-504, Cys-505, His-506, and His-510 each coordinate Cu cation.

The protein belongs to the multicopper oxidase family. The cofactor is Cu cation.

It is found in the secreted. The enzyme catalyses 4 hydroquinone + O2 = 4 benzosemiquinone + 2 H2O. Functionally, lignin degradation and detoxification of lignin-derived products. The polypeptide is Laccase-1 (lcc1) (Botryotinia fuckeliana (Noble rot fungus)).